The following is a 328-amino-acid chain: PDZ and LIM domain protein 1 (328 aa).

At Thr-2 the chain carries N-acetylthreonine. The PDZ domain occupies 3-85; sequence TLQIVLQGPG…NMTLTVARSE (83 aa). Ser-90 and Ser-130 each carry phosphoserine. At Tyr-144 the chain carries Phosphotyrosine. Residues 257–316 enclose the LIM zinc-binding domain; the sequence is PMCDKCGTGIVGVFVKLRERHRHPECYVCTDCGTNLKQKGHFFVEDQIYCEKHARERVTP. Residues Cys-259, Cys-262, His-279, Cys-282, Cys-285, Cys-288, Cys-306, and His-309 each coordinate Zn(2+). Thr-315 bears the Phosphothreonine mark. Phosphotyrosine is present on Tyr-320.

As to quaternary structure, interacts with ACTN1, ACTN2 and ACTN4. Interacts with PDLIM4.

It is found in the cytoplasm. It localises to the cytoskeleton. The protein localises to the myofibril. The protein resides in the sarcomere. Its subcellular location is the z line. Cytoskeletal protein that may act as an adapter that brings other proteins (like kinases) to the cytoskeleton. Involved in assembly, disassembly and directioning of stress fibers in fibroblasts. Required for the localization of ACTN1 and PALLD to stress fibers. Required for cell migration and in maintaining cell polarity of fibroblasts. This is PDZ and LIM domain protein 1 (PDLIM1) from Bos taurus (Bovine).